The chain runs to 310 residues: p-hydroxybenzoic acid efflux pump subunit AaeA (310 aa).

The chain crosses the membrane as a helical span at residues A12–Y32.

Belongs to the membrane fusion protein (MFP) (TC 8.A.1) family.

The protein localises to the cell inner membrane. Forms an efflux pump with AaeB. The protein is p-hydroxybenzoic acid efflux pump subunit AaeA of Escherichia coli O8 (strain IAI1).